Consider the following 429-residue polypeptide: MINDASSAAFERAQALLPGGVNSPVRAFRGVGGVPRFIDHGAGAYLYDIDGNQYIDYVLSWGPLILGHAYPAVVEAICAQAQRGTSFGAPTELESELAELVIAAVPSVEMVRFVSSGTEAAMSAIRLARAYTQREKIIKFEGCYHGHADPFLVQAGSGVATLGLPDSPGVLKSATSNTLTAPFNDLEAVEALFKANAGQVAALVIEPVAGNMGFVLPREGYLAGLRQLCDQYGALLIFDEVMTGFRVAYGGAQAYFNVMPDLTCLGKVVGGGLPAAAYGGRREIMQMVAPAGTMYQAGTLSGNPLAMVAGIVTLREIAKPEVFERLTGVTSTLCQGFWKAAFKNGIPFQAHKAGSMWGFFFAGDEVYDFTSAKRADTAMFGKFFHAMLEQGVYLAPSQFEAAFVSTAHTDELVAQTINAAQAAFASIRS.

Lys267 carries the post-translational modification N6-(pyridoxal phosphate)lysine.

Belongs to the class-III pyridoxal-phosphate-dependent aminotransferase family. HemL subfamily. As to quaternary structure, homodimer. Pyridoxal 5'-phosphate is required as a cofactor.

It is found in the cytoplasm. The catalysed reaction is (S)-4-amino-5-oxopentanoate = 5-aminolevulinate. It participates in porphyrin-containing compound metabolism; protoporphyrin-IX biosynthesis; 5-aminolevulinate from L-glutamyl-tRNA(Glu): step 2/2. The polypeptide is Glutamate-1-semialdehyde 2,1-aminomutase (Herpetosiphon aurantiacus (strain ATCC 23779 / DSM 785 / 114-95)).